The following is a 399-amino-acid chain: S-adenosylmethionine synthase (399 aa).

His-17 contacts ATP. A Mg(2+)-binding site is contributed by Asp-19. Residue Glu-45 participates in K(+) binding. Positions 58 and 101 each coordinate L-methionine. Residues 101–111 (QSADIAMGVDQ) are flexible loop. ATP-binding positions include 177-179 (DGK), 244-245 (RF), Asp-253, 259-260 (RK), Ala-276, and Lys-280. Asp-253 lines the L-methionine pocket. Lys-284 is an L-methionine binding site.

The protein belongs to the AdoMet synthase family. In terms of assembly, homotetramer; dimer of dimers. Mg(2+) is required as a cofactor. It depends on K(+) as a cofactor.

The protein localises to the cytoplasm. The catalysed reaction is L-methionine + ATP + H2O = S-adenosyl-L-methionine + phosphate + diphosphate. It participates in amino-acid biosynthesis; S-adenosyl-L-methionine biosynthesis; S-adenosyl-L-methionine from L-methionine: step 1/1. Catalyzes the formation of S-adenosylmethionine (AdoMet) from methionine and ATP. The overall synthetic reaction is composed of two sequential steps, AdoMet formation and the subsequent tripolyphosphate hydrolysis which occurs prior to release of AdoMet from the enzyme. This is S-adenosylmethionine synthase from Bacillus thuringiensis (strain Al Hakam).